The primary structure comprises 505 residues: Flagellin (505 aa).

Belongs to the bacterial flagellin family.

Its subcellular location is the secreted. The protein resides in the bacterial flagellum. Flagellin is the subunit protein which polymerizes to form the filaments of bacterial flagella. The polypeptide is Flagellin (fliC) (Salmonella muenchen).